Reading from the N-terminus, the 83-residue chain is Mitochondrial import inner membrane translocase subunit Tim8 B (83 aa).

At Ala-2 the chain carries N-acetylalanine. The Twin CX3C motif signature appears at 36–59 (CWDKCVEKPGNRLDSRTENCLSSC). Cystine bridges form between Cys-36/Cys-59 and Cys-40/Cys-55.

This sequence belongs to the small Tim family. In terms of assembly, heterohexamer; possibly composed of 3 copies of TIMM8B and 3 copies of TIMM13, named soluble 70 kDa complex. Associates with the TIM22 complex, whose core is composed of TIMM22.

It is found in the mitochondrion inner membrane. In terms of biological role, probable mitochondrial intermembrane chaperone that participates in the import and insertion of some multi-pass transmembrane proteins into the mitochondrial inner membrane. Also required for the transfer of beta-barrel precursors from the TOM complex to the sorting and assembly machinery (SAM complex) of the outer membrane. Acts as a chaperone-like protein that protects the hydrophobic precursors from aggregation and guide them through the mitochondrial intermembrane space. This chain is Mitochondrial import inner membrane translocase subunit Tim8 B (TIMM8B), found in Bos taurus (Bovine).